Reading from the N-terminus, the 144-residue chain is Large ribosomal subunit protein uL14 (144 aa).

Belongs to the universal ribosomal protein uL14 family. Part of the 50S ribosomal subunit. Forms a cluster with proteins L3 and L24e, part of which may contact the 16S rRNA in 2 intersubunit bridges.

Functionally, binds to 23S rRNA. Forms part of two intersubunit bridges in the 70S ribosome. The chain is Large ribosomal subunit protein uL14 from Pyrobaculum aerophilum (strain ATCC 51768 / DSM 7523 / JCM 9630 / CIP 104966 / NBRC 100827 / IM2).